The primary structure comprises 1343 residues: DNA-directed RNA polymerase subunit beta (1343 aa).

It belongs to the RNA polymerase beta chain family. In terms of assembly, the RNAP catalytic core consists of 2 alpha, 1 beta, 1 beta' and 1 omega subunit. When a sigma factor is associated with the core the holoenzyme is formed, which can initiate transcription.

The catalysed reaction is RNA(n) + a ribonucleoside 5'-triphosphate = RNA(n+1) + diphosphate. Its function is as follows. DNA-dependent RNA polymerase catalyzes the transcription of DNA into RNA using the four ribonucleoside triphosphates as substrates. This Shewanella woodyi (strain ATCC 51908 / MS32) protein is DNA-directed RNA polymerase subunit beta.